Consider the following 270-residue polypeptide: 4-hydroxy-tetrahydrodipicolinate reductase (270 aa).

NAD(+)-binding positions include 11–16 (GAGGRM) and glutamate 37. Residue arginine 38 coordinates NADP(+). NAD(+)-binding positions include 101–103 (GTT) and 125–128 (APNM). Histidine 158 acts as the Proton donor/acceptor in catalysis. (S)-2,3,4,5-tetrahydrodipicolinate is bound at residue histidine 159. The active-site Proton donor is lysine 162. 168 to 169 (GT) lines the (S)-2,3,4,5-tetrahydrodipicolinate pocket.

It belongs to the DapB family.

The protein localises to the cytoplasm. The catalysed reaction is (S)-2,3,4,5-tetrahydrodipicolinate + NAD(+) + H2O = (2S,4S)-4-hydroxy-2,3,4,5-tetrahydrodipicolinate + NADH + H(+). It carries out the reaction (S)-2,3,4,5-tetrahydrodipicolinate + NADP(+) + H2O = (2S,4S)-4-hydroxy-2,3,4,5-tetrahydrodipicolinate + NADPH + H(+). Its pathway is amino-acid biosynthesis; L-lysine biosynthesis via DAP pathway; (S)-tetrahydrodipicolinate from L-aspartate: step 4/4. Catalyzes the conversion of 4-hydroxy-tetrahydrodipicolinate (HTPA) to tetrahydrodipicolinate. The polypeptide is 4-hydroxy-tetrahydrodipicolinate reductase (Shewanella oneidensis (strain ATCC 700550 / JCM 31522 / CIP 106686 / LMG 19005 / NCIMB 14063 / MR-1)).